The following is a 418-amino-acid chain: Cell division protein FtsZ (418 aa).

GTP-binding positions include 27–31 (GGGSN), 114–116 (GTG), Glu145, Lys149, and Asp193. The disordered stretch occupies residues 386–418 (KNGVKGHTFGVPLPSVNEDLDEPTFLRNRNKGL).

The protein belongs to the FtsZ family. In terms of assembly, homodimer. Polymerizes to form a dynamic ring structure in a strictly GTP-dependent manner. Interacts directly with several other division proteins.

The protein resides in the cytoplasm. Its function is as follows. Essential cell division protein that forms a contractile ring structure (Z ring) at the future cell division site. The regulation of the ring assembly controls the timing and the location of cell division. One of the functions of the FtsZ ring is to recruit other cell division proteins to the septum to produce a new cell wall between the dividing cells. Binds GTP and shows GTPase activity. The sequence is that of Cell division protein FtsZ from Treponema pallidum (strain Nichols).